Consider the following 529-residue polypeptide: uncharacterized protein (529 aa).

The segment at residues 26–58 (CDSCRKQKTRCLAGSVEDENRACLRCRSLNMDC) is a DNA-binding region (zn(2)-C6 fungal-type).

Its subcellular location is the nucleus. This is an uncharacterized protein from Schizosaccharomyces pombe (strain 972 / ATCC 24843) (Fission yeast).